Reading from the N-terminus, the 372-residue chain is Putative glutamate--cysteine ligase 2 (372 aa).

It belongs to the glutamate--cysteine ligase type 2 family. YbdK subfamily. Homodimer.

The catalysed reaction is L-cysteine + L-glutamate + ATP = gamma-L-glutamyl-L-cysteine + ADP + phosphate + H(+). In terms of biological role, ATP-dependent carboxylate-amine ligase which exhibits weak glutamate--cysteine ligase activity. The chain is Putative glutamate--cysteine ligase 2 (ybdK) from Salmonella dublin (strain CT_02021853).